Consider the following 477-residue polypeptide: Glycogen synthase (477 aa).

An ADP-alpha-D-glucose-binding site is contributed by Lys15.

It belongs to the glycosyltransferase 1 family. Bacterial/plant glycogen synthase subfamily.

It carries out the reaction [(1-&gt;4)-alpha-D-glucosyl](n) + ADP-alpha-D-glucose = [(1-&gt;4)-alpha-D-glucosyl](n+1) + ADP + H(+). It participates in glycan biosynthesis; glycogen biosynthesis. Functionally, synthesizes alpha-1,4-glucan chains using ADP-glucose. In Mannheimia succiniciproducens (strain KCTC 0769BP / MBEL55E), this protein is Glycogen synthase.